A 64-amino-acid chain; its full sequence is Large ribosomal subunit protein bL35 (64 aa).

Residues 1 to 64 (MPKNKTNSGA…RKSIKKLLGK (64 aa)) form a disordered region.

This sequence belongs to the bacterial ribosomal protein bL35 family.

This chain is Large ribosomal subunit protein bL35, found in Beutenbergia cavernae (strain ATCC BAA-8 / DSM 12333 / CCUG 43141 / JCM 11478 / NBRC 16432 / NCIMB 13614 / HKI 0122).